Consider the following 75-residue polypeptide: Large ribosomal subunit protein bL28 (75 aa).

Residues M1–A21 are disordered.

Belongs to the bacterial ribosomal protein bL28 family.

This chain is Large ribosomal subunit protein bL28, found in Blochmanniella pennsylvanica (strain BPEN).